A 293-amino-acid chain; its full sequence is MASTSRLENNKVCCYAHPESPLIEDYRAGDMICSECGLVVGDAFGGPENPLLSGGHLSTIIGPGTGSASFDAFGAPKYPNRRTMRSSDRSLISAFKEISSMADRINLPKTIVDRANTLFKQVHDGKNLKGRSNDAKASACLYIACRQEGVPRTFKEICAVSKISKKEIGRCFKLTLKALETSVDLITTADFMCRFCANLDLPNMVQRAATHIAKKAVEMDIVPGRSPISVAAAAIYMASQASEHKRSQKEIGDIAGVADVTIRQSYKLMYPHAAKLFPEDFKFTTPIDQLPQM.

The segment at 10–41 (NKVCCYAHPESPLIEDYRAGDMICSECGLVVG) adopts a TFIIB-type zinc-finger fold. Zn(2+) is bound by residues cysteine 14, histidine 17, cysteine 33, and cysteine 36. 2 repeat units span residues 101 to 177 (MADR…LTLK) and 195 to 271 (FCAN…LMYP).

It belongs to the TFIIB family. Associates with TFIID-IIA (DA complex) to form TFIID-IIA-IIB (DAB-complex) which is then recognized by polymerase II.

It localises to the nucleus. In terms of biological role, general factor that plays a major role in the activation of eukaryotic genes transcribed by RNA polymerase II. This Drosophila virilis (Fruit fly) protein is Transcription initiation factor IIB (TfIIB).